A 129-amino-acid chain; its full sequence is MITTGKRKTAVARAVAKKGKGIVTINGYPVELYPVRVLRNKIMEPLLIAEDKAKDLDIAVKVRGGGVTGQADASRTAIARAIVKYLNDTELENLFRQYDRTLIVNDVRIKLPKKAGGRGARAKKQKSYR.

This sequence belongs to the universal ribosomal protein uS9 family.

This chain is Small ribosomal subunit protein uS9 (rps9), found in Thermoplasma acidophilum (strain ATCC 25905 / DSM 1728 / JCM 9062 / NBRC 15155 / AMRC-C165).